A 188-amino-acid chain; its full sequence is Apolipophorin-3 (188 aa).

The N-terminal stretch at 1-17 (MVAKLFVLVACIALSHA) is a signal peptide. The propeptide occupies 18-22 (AMVRR).

This sequence belongs to the insect apolipophorin-3 family. As to quaternary structure, equilibrium between a soluble monomer and a bound lipoprotein form. Apolipophorin-3 associates with lipophorin during lipid loading until each particle contains 9 or 14 molecules of apolipophorin-3. In terms of tissue distribution, expressed in fat body and secreted in hemolymph. Also expressed in ovary and testis at lower levels.

The protein localises to the secreted. Functionally, assists in the loading of diacylglycerol, generated from triacylglycerol stores in the fat body through the action of adipokinetic hormone, into lipophorin, the hemolymph lipoprotein. It increases the lipid carrying capacity of lipophorin by covering the expanding hydrophobic surface resulting from diacylglycerol uptake. It thus plays a critical role in the transport of lipids during flight in several species of insects. This is Apolipophorin-3 from Spodoptera litura (Asian cotton leafworm).